The following is a 1193-amino-acid chain: Laminin subunit gamma-2 (1193 aa).

A signal peptide spans 1–21; that stretch reads MPALWLGCCLCFSLLLPAARA. 12 cysteine pairs are disulfide-bonded: Cys-28–Cys-37, Cys-30–Cys-53, Cys-56–Cys-65, Cys-68–Cys-81, Cys-84–Cys-96, Cys-86–Cys-102, Cys-104–Cys-113, Cys-116–Cys-128, Cys-139–Cys-150, Cys-141–Cys-155, Cys-157–Cys-166, and Cys-169–Cys-184. 3 consecutive Laminin EGF-like domains span residues 28-83, 84-130, and 139-186; these read CDCN…RCLP, CNCN…GCTQ, and CDCD…GCTQ. The region spanning 187–196 is the Laminin EGF-like 4; first part domain; sequence CFCYGHSASC. The 169-residue stretch at 213–381 folds into the Laminin IV type A domain; sequence QDVDGWKAVQ…SGAPAPWVEQ (169 aa). Residues Asn-342 and Asn-362 are each glycosylated (N-linked (GlcNAc...) asparagine). The Laminin EGF-like 4; second part domain occupies 382–415; it reads CICPVGYKGQFCQDCASGYKRDSARLGPFGTCIP. 3 Laminin EGF-like domains span residues 416–461, 462–516, and 517–572; these read CNCQ…SCKP, CPCH…PCQP, and CQCN…KCRA. 11 cysteine pairs are disulfide-bonded: Cys-462/Cys-470, Cys-464/Cys-481, Cys-484/Cys-493, Cys-496/Cys-514, Cys-517/Cys-531, Cys-519/Cys-538, Cys-541/Cys-550, Cys-553/Cys-570, Cys-573/Cys-585, Cys-575/Cys-591, and Cys-593/Cys-602. In terms of domain architecture, Laminin EGF-like 8; truncated spans 573–602; that stretch reads CNCNPMGSEPVGCRSDGTCVCKPGFGGPNC. Positions 603-1193 are domain II and I; the sequence is EHGAFSCPAC…CYNTQALEQQ (591 aa). Positions 611–718 form a coiled coil; it reads ACYNQVKIQM…GSQYQNRVRD (108 aa). Residues Ser-803 and Ser-805 are each glycosylated (O-linked (Xyl...) (chondroitin sulfate) serine). Coiled coils occupy residues 811–1076 and 1117–1193; these read AVVQ…AVQM and EEGL…LEQQ. N-linked (GlcNAc...) asparagine glycans are attached at residues Asn-942 and Asn-1033.

In terms of assembly, laminin is a complex glycoprotein, consisting of three different polypeptide chains (alpha, beta, gamma), which are bound to each other by disulfide bonds into a cross-shaped molecule comprising one long and three short arms with globules at each end. Gamma-2 is a subunit of laminin-5 (laminin-332 or epiligrin/kalinin/nicein). Post-translationally, O-glycosylated; contains chondroitin sulfate (CS). CS attachment is on either Ser-803 or Ser-805. In terms of tissue distribution, the large variant is expressed only in specific epithelial cells of embryonic and neonatal tissues. In 17-week old embryo the small variant is found in cerebral cortex, lung, and distal tubes of kidney, but not in epithelia except for distal tubuli.

It localises to the secreted. The protein localises to the extracellular space. It is found in the extracellular matrix. The protein resides in the basement membrane. In terms of biological role, binding to cells via a high affinity receptor, laminin is thought to mediate the attachment, migration and organization of cells into tissues during embryonic development by interacting with other extracellular matrix components. Ladsin exerts cell-scattering activity toward a wide variety of cells, including epithelial, endothelial, and fibroblastic cells. In Homo sapiens (Human), this protein is Laminin subunit gamma-2 (LAMC2).